We begin with the raw amino-acid sequence, 102 residues long: Large ribosomal subunit protein bL21 (102 aa).

Belongs to the bacterial ribosomal protein bL21 family. As to quaternary structure, part of the 50S ribosomal subunit. Contacts protein L20.

This protein binds to 23S rRNA in the presence of protein L20. The polypeptide is Large ribosomal subunit protein bL21 (Shouchella clausii (strain KSM-K16) (Alkalihalobacillus clausii)).